The primary structure comprises 464 residues: Chaperone SurA (464 aa).

The N-terminal stretch at 1 to 25 (MTRYFSIVLSLLLAVSCVFLPVASA) is a signal peptide. 2 consecutive PpiC domains span residues 175–277 (GAQY…KLVE) and 292–391 (ATEY…QRLG). Residues 439 to 464 (PADDHQTPSAAVIPATGAVLPSATKH) are disordered.

Its subcellular location is the periplasm. It carries out the reaction [protein]-peptidylproline (omega=180) = [protein]-peptidylproline (omega=0). Functionally, chaperone involved in the correct folding and assembly of outer membrane proteins. Recognizes specific patterns of aromatic residues and the orientation of their side chains, which are found more frequently in integral outer membrane proteins. May act in both early periplasmic and late outer membrane-associated steps of protein maturation. This chain is Chaperone SurA, found in Xylella fastidiosa (strain 9a5c).